A 213-amino-acid chain; its full sequence is MESWLLVILAFLVLERLWPLIDSLIQRFAQANSTKLKELMHQRQAILAEQKEISAQDQYVKWTKNNRTLEKINKQIEEEKKQLLSQVDRTKASLKKVKLVLITVPFTILKFYKGKMPIYDLPKGLFPNYLQGLFQHGWVYLALGPLNIKKVGDGTHVTVSLAIWLFALLKVVSTLGNIWESLTAPAIPAPTITTDPIDQTNESEKPPVDQPVD.

Over 1-4 the chain is Lumenal; sequence MESW. A helical membrane pass occupies residues 5 to 25; it reads LLVILAFLVLERLWPLIDSLI. Topologically, residues 26–98 are cytoplasmic; it reads QRFAQANSTK…RTKASLKKVK (73 aa). A coiled-coil region spans residues 55–99; the sequence is AQDQYVKWTKNNRTLEKINKQIEEEKKQLLSQVDRTKASLKKVKL. The helical transmembrane segment at 99–119 threads the bilayer; the sequence is LVLITVPFTILKFYKGKMPIY. At 120-158 the chain is on the lumenal side; that stretch reads DLPKGLFPNYLQGLFQHGWVYLALGPLNIKKVGDGTHVT. A helical transmembrane segment spans residues 159–175; the sequence is VSLAIWLFALLKVVSTL. Residues 176–213 are Cytoplasmic-facing; the sequence is GNIWESLTAPAIPAPTITTDPIDQTNESEKPPVDQPVD. The interval 193 to 213 is disordered; sequence TTDPIDQTNESEKPPVDQPVD.

This sequence belongs to the WRB/GET1 family. In terms of assembly, component of the Golgi to ER traffic (GET) complex, which is composed of GET1, GET2 and GET3. Within the complex, GET1 and GET2 form a heterotetramer which is stabilized by phosphatidylinositol binding and which binds to the GET3 homodimer.

Its subcellular location is the endoplasmic reticulum membrane. The protein localises to the golgi apparatus membrane. Functionally, required for the post-translational delivery of tail-anchored (TA) proteins to the endoplasmic reticulum. Together with GET2, acts as a membrane receptor for soluble GET3, which recognizes and selectively binds the transmembrane domain of TA proteins in the cytosol. The GET complex cooperates with the HDEL receptor ERD2 to mediate the ATP-dependent retrieval of resident ER proteins that contain a C-terminal H-D-E-L retention signal from the Golgi to the ER. This chain is Golgi to ER traffic protein 1, found in Kluyveromyces lactis (strain ATCC 8585 / CBS 2359 / DSM 70799 / NBRC 1267 / NRRL Y-1140 / WM37) (Yeast).